The following is a 1067-amino-acid chain: Probable importin subunit beta-4 (1067 aa).

The 68-residue stretch at 27–94 (ATRALETKYL…RSNLLDITLK (68 aa)) folds into the Importin N-terminal domain. HEAT repeat units follow at residues 159–196 (KLLL…VLES), 379–416 (GNLP…EIPT), 420–457 (KHHA…GLDK), 591–633 (PFLE…SVET), 890–927 (PFTR…FSTE), and 1013–1050 (QHLG…EIAP).

This sequence belongs to the importin beta family.

The protein localises to the cytoplasm. The protein resides in the nucleus. It is found in the nucleus envelope. Its function is as follows. Required for nuclear protein import, its predominant substrate seems to be ribosomal proteins. Binds to nucleoporins and the GTP-bound form of gsp1 (Ran). This is Probable importin subunit beta-4 (kap123) from Schizosaccharomyces pombe (strain 972 / ATCC 24843) (Fission yeast).